The primary structure comprises 258 residues: GCN5-related N-acetyltransferase 2, chloroplastic (258 aa).

The transit peptide at 1–58 (MLLIPISSSSSSSISPPPNSYPSNHHSLFFSNLTFPIQHGSRKLKTLRLRANFWESIR) directs the protein to the chloroplast. The interaction with begomoviruses NSP protein stretch occupies residues 107-194 (IIFSSGGEID…DHAFNATIWD (88 aa)). The region spanning 107 to 258 (IIFSSGGEID…GIKGMFWYPK (152 aa)) is the N-acetyltransferase domain. Residues 195-197 (VLV), 203-208 (GQGLGK), 231-233 (DSQ), and Y238 contribute to the acetyl-CoA site. Y238 serves as the catalytic Proton donor.

It belongs to the acetyltransferase family. GNAT subfamily. As to quaternary structure, oligomer. Interacts with begomoviruses NSP but not with CP. This interaction may allow NSP to recruit NSI monomers to acetylate viral genome-bound CP and thus regulate nuclear export of viral genome by NSP. Post-translationally, S-sulfhydrated and activated by hydrogen sulfide H(2)S to promote melatonin accumulation and subsequent melatonin-dependent stomotal closure to combat osmotic stress. In terms of processing, autoacetylated. In terms of tissue distribution, highly expressed in cauline leaves and seeds, at lower levels in stems, siliques, inflorescences and rosettes leaves and at very low levels in roots. Expressed in the xylem parenchyma and phloem of the leaves and root, and in guard cells of young leaves.

It is found in the plastid. It localises to the chloroplast. The enzyme catalyses 5-methoxytryptamine + acetyl-CoA = melatonin + CoA + H(+). It carries out the reaction L-lysyl-[histone] + acetyl-CoA = N(6)-acetyl-L-lysyl-[histone] + CoA + H(+). The catalysed reaction is L-lysyl-[protein] + acetyl-CoA = N(6)-acetyl-L-lysyl-[protein] + CoA + H(+). It catalyses the reaction serotonin + acetyl-CoA = N-acetylserotonin + CoA + H(+). The enzyme catalyses N-terminal L-alanyl-[protein] + acetyl-CoA = N-terminal N(alpha)-acetyl-L-alanyl-[protein] + CoA + H(+). It carries out the reaction N-terminal L-seryl-[protein] + acetyl-CoA = N-terminal N(alpha)-acetyl-L-seryl-[protein] + CoA + H(+). The catalysed reaction is N-terminal L-valyl-[protein] + acetyl-CoA = N-terminal N(alpha)-acetyl-L-valyl-[protein] + CoA + H(+). It catalyses the reaction N-terminal glycyl-[protein] + acetyl-CoA = N-terminal N(alpha)-acetylglycyl-[protein] + CoA + H(+). The enzyme catalyses an N-terminal L-alpha-aminoacyl-[protein] + acetyl-CoA = N-terminal N(alpha)-acetyl-L-alpha-aminoacyl-[protein] + CoA + H(+). It carries out the reaction N-terminal L-threonyl-[protein] + acetyl-CoA = N-terminal N(alpha)-acetyl-L-threonyl-[protein] + CoA + H(+). The catalysed reaction is N-terminal L-methionyl-[protein] + acetyl-CoA = N-terminal N(alpha)-acetyl-L-methionyl-[protein] + CoA + H(+). It catalyses the reaction N-terminal L-leucyl-[protein] + acetyl-CoA = N-terminal N(alpha)-acetyl-L-leucyl-[protein] + CoA + H(+). Its activity is regulated as follows. Inhibited by the viral nuclear shuttle protein (NSP) that binds to the region required for oligomerization. Protein acetyltransferase with dual specificity triggering both N-alpha-acetylation (NTA), with a preference for alanine, serine, threonine, methionine and to a lower extent valine as substrates (can also use glycine and leucine), and epsilon-lysine acetylation (KA) of several plastid proteins. Triggers lysine acetylation in KEA1 and KEA2. Acetylates in vitro histones H2A and H3. Does not act as a transcriptional activator but required for the dynamic reorganization of thylakoid protein complexes and grana during photosynthetic state transitions. Involved in melatonin biosynthesis by catalyzing the formation of N-acetylserotonin (NAS) from serotonin and of melatonin (N-acetyl-5-methoxytryptamine) from 5-methoxytryptamine (5-MT). By triggering melatonin biosynthesis, contributes to the chloroplast protein quality control (CPQC), which plays a pivotal role in starch synthesis, and confers melatonin-associated tolerance to high light (HL) stress. Prevents the accumulation of oil and anthocyanin content in mature seeds and avoids seed germination in a melatonin-dependent manner, but promotes mucilage production in the seed coat. Contributes to melatonin-mediated anthocyanin production in cold-exposed seedlings. Implicated in melatonin-monitored circadian dynamics of stomatal aperture to minimize night water loss and promote drought tolerance, partly by triggering hydrogen sulfide H(2)S-dependent stomotal closure in response to osmotic stress. Its function is as follows. (Microbial infection) Required for begomovirus infection and systemic spread. In case of begomoviruses infection, acetylates the capsid protein (CP), but not the nuclear shuttle protein (NSP). Stimulates melatonin-triggered defense responses to the necrotrophic Botrytis cinerea. This chain is GCN5-related N-acetyltransferase 2, chloroplastic, found in Arabidopsis thaliana (Mouse-ear cress).